A 159-amino-acid chain; its full sequence is Kojic acid related protein 6 (159 aa).

Negatively regulates mycelium growth and conidial formation and is required for stress tolerance. Plays a role in kojic acid synthesis in coordination with kojA, kojR and kojT where it acts upstream of kojA. This chain is Kojic acid related protein 6, found in Aspergillus oryzae (strain ATCC 42149 / RIB 40) (Yellow koji mold).